The chain runs to 142 residues: Augurin-A (142 aa).

A signal peptide spans 1 to 28; that stretch reads MLSEKFHLRLLTLLTLLTALSLTDVASE. 2 propeptides span residues 29–66 and 127–142; these read SKLE…LKRP and GAAS…YDYY.

This sequence belongs to the augurin family.

The protein resides in the secreted. It is found in the cytoplasm. It localises to the apical cell membrane. Functionally, probable hormone. Required for the proper formation of the central nervous system by attenuating cell proliferation during development. The chain is Augurin-A from Danio rerio (Zebrafish).